Consider the following 560-residue polypeptide: Dihydroxy-acid dehydratase (560 aa).

A disordered region spans residues 1–20 (MGDNLKKRSSMTTDGDNRAP). Residue Cys-52 participates in [2Fe-2S] cluster binding. Asp-84 contributes to the Mg(2+) binding site. Cys-125 is a binding site for [2Fe-2S] cluster. Mg(2+)-binding residues include Asp-126 and Lys-127. Residue Lys-127 is modified to N6-carboxylysine. Cys-197 contributes to the [2Fe-2S] cluster binding site. Glu-448 is a Mg(2+) binding site. Residue Ser-474 is the Proton acceptor of the active site.

It belongs to the IlvD/Edd family. In terms of assembly, homodimer. [2Fe-2S] cluster serves as cofactor. Requires Mg(2+) as cofactor.

It catalyses the reaction (2R)-2,3-dihydroxy-3-methylbutanoate = 3-methyl-2-oxobutanoate + H2O. It carries out the reaction (2R,3R)-2,3-dihydroxy-3-methylpentanoate = (S)-3-methyl-2-oxopentanoate + H2O. Its pathway is amino-acid biosynthesis; L-isoleucine biosynthesis; L-isoleucine from 2-oxobutanoate: step 3/4. It functions in the pathway amino-acid biosynthesis; L-valine biosynthesis; L-valine from pyruvate: step 3/4. Functionally, functions in the biosynthesis of branched-chain amino acids. Catalyzes the dehydration of (2R,3R)-2,3-dihydroxy-3-methylpentanoate (2,3-dihydroxy-3-methylvalerate) into 2-oxo-3-methylpentanoate (2-oxo-3-methylvalerate) and of (2R)-2,3-dihydroxy-3-methylbutanoate (2,3-dihydroxyisovalerate) into 2-oxo-3-methylbutanoate (2-oxoisovalerate), the penultimate precursor to L-isoleucine and L-valine, respectively. The chain is Dihydroxy-acid dehydratase from Leptospira interrogans serogroup Icterohaemorrhagiae serovar Lai (strain 56601).